We begin with the raw amino-acid sequence, 126 residues long: Probable small nuclear ribonucleoprotein Sm D1 (126 aa).

Positions 2 to 74 constitute a Sm domain; it reads KLVRFLMKLS…IRYIILPDPL (73 aa). The interval 86–126 is disordered; it reads RKKARAARAGASRGRGRGGMRGGRGGRGRGRGGPRGGGPRR. Basic residues predominate over residues 99-126; the sequence is GRGRGGMRGGRGGRGRGRGGPRGGGPRR.

It belongs to the snRNP core protein family.

The protein resides in the nucleus. The protein localises to the cytoplasm. Its subcellular location is the cytosol. Its function is as follows. Plays a role in pre-mRNA splicing as a core component of the spliceosomal U1, U2, U4 and U5 small nuclear ribonucleoproteins (snRNPs), the building blocks of the spliceosome. The protein is Probable small nuclear ribonucleoprotein Sm D1 (snr-3) of Caenorhabditis elegans.